The following is a 145-amino-acid chain: uncharacterized protein (145 aa).

The first 26 residues, 1–26 (MAILLPLKSILPWCCITFSFLLSSSG), serve as a signal peptide directing secretion.

This is an uncharacterized protein from Saccharomyces cerevisiae (strain ATCC 204508 / S288c) (Baker's yeast).